Reading from the N-terminus, the 563-residue chain is Pyruvate decarboxylase isozyme 2 (563 aa).

Pyruvate-binding residues include Asp28, His115, Tyr157, and Arg224. Thiamine diphosphate-binding positions include Thr390 and 413–415; that span reads GSI. Asp444 lines the Mg(2+) pocket. Thiamine diphosphate is bound by residues 445-446 and 471-476; these read GS and NNGYTI. Residues Asn471 and Gly473 each coordinate Mg(2+). Position 477 (Glu477) interacts with pyruvate.

It belongs to the TPP enzyme family. Homotetramer. It depends on Mg(2+) as a cofactor. Thiamine diphosphate is required as a cofactor.

Its subcellular location is the cytoplasm. The protein localises to the nucleus. It carries out the reaction pyruvate + H(+) = acetaldehyde + CO2. The catalysed reaction is 3-methyl-2-oxobutanoate + H(+) = 2-methylpropanal + CO2. It catalyses the reaction (S)-3-methyl-2-oxopentanoate + H(+) = 2-methylbutanal + CO2. The enzyme catalyses indole-3-pyruvate + H(+) = indole-3-acetaldehyde + CO2. It carries out the reaction 3-phenylpyruvate + H(+) = 2-phenylacetaldehyde + CO2. The catalysed reaction is 2-oxobutanoate + H(+) = propanal + CO2. It catalyses the reaction 2-oxopentanoate + H(+) = butanal + CO2. The enzyme catalyses 2 acetaldehyde = acetoin. It carries out the reaction acetaldehyde + pyruvate + H(+) = acetoin + CO2. It participates in fermentation; ethanol fermentation. It functions in the pathway amino-acid degradation; Ehrlich pathway. Its activity is regulated as follows. Allosterically activated by its substrate, pyruvate. In terms of biological role, second most abundant of three pyruvate decarboxylases (PDC1, PDC5, PDC6) implicated in the nonoxidative conversion of pyruvate to acetaldehyde and carbon dioxide during alcoholic fermentation. Most of the produced acetaldehyde is subsequently reduced to ethanol, but some is required for cytosolic acetyl-CoA production for biosynthetic pathways. The enzyme is also one of five 2-oxo acid decarboxylases (PDC1, PDC5, PDC6, ARO10, and THI3) able to decarboxylate more complex 2-oxo acids (alpha-keto-acids) than pyruvate, which seem mainly involved in amino acid catabolism. Here the enzyme catalyzes the decarboxylation of amino acids, which, in a first step, have been transaminated to the corresponding 2-oxo acids. In a third step, the resulting aldehydes are reduced to alcohols, collectively referred to as fusel oils or alcohols. Its preferred substrates are the transaminated amino acids derived from threonine (2-oxobutanoate), norvaline (2-oxopentanoate), valine (3-methyl-2-oxobutanoate, also alpha-keto-isovalerate), isoleucine ((3S)-3-methyl-2-oxopentanoate, also alpha-keto-beta-methylvalerate), phenylalanine (phenylpyruvate), and tryptophan (3-(indol-3-yl)pyruvate), whereas transaminated leucine is no substrate. In a side-reaction the carbanionic intermediate (or active aldehyde) generated by decarboxylation or by activation of an aldehyde can react with an aldehyde via condensation (or carboligation) yielding a 2-hydroxy ketone, collectively called acyloins. The chain is Pyruvate decarboxylase isozyme 2 (PDC5) from Saccharomyces cerevisiae (strain ATCC 204508 / S288c) (Baker's yeast).